The sequence spans 894 residues: Microsomal triglyceride transfer protein large subunit (894 aa).

Positions 1-18 (MILLAVLFLCFISSYSAS) are cleaved as a signal peptide. Residues 28 to 659 (LNNDRLYKLT…IFQYIGKAGL (632 aa)) enclose the Vitellogenin domain. C174 and C194 are joined by a disulfide.

As to quaternary structure, heterodimer; heterodimerizes with the protein disulfide isomerase (P4HB/PDI). Interacts with APOB. Interacts with PRAP1. In terms of tissue distribution, liver and small intestine. Also found in ovary, testis and kidney.

The protein localises to the endoplasmic reticulum. The protein resides in the golgi apparatus. It carries out the reaction a 1,2-diacyl-sn-glycero-3-phosphocholine(in) = a 1,2-diacyl-sn-glycero-3-phosphocholine(out). It catalyses the reaction a 1,2-diacyl-sn-glycero-3-phosphoethanolamine(in) = a 1,2-diacyl-sn-glycero-3-phosphoethanolamine(out). The enzyme catalyses a cholesterol ester(in) = a cholesterol ester(out). The catalysed reaction is a triacyl-sn-glycerol(in) = a triacyl-sn-glycerol(out). Catalyzes the transport of triglyceride, cholesteryl ester, and phospholipid between phospholipid surfaces. Required for the assembly and secretion of plasma lipoproteins that contain apolipoprotein B. May be involved in regulating cholesteryl ester biosynthesis in cells that produce lipoproteins. The chain is Microsomal triglyceride transfer protein large subunit (MTTP) from Homo sapiens (Human).